The primary structure comprises 156 residues: SsrA-binding protein (156 aa).

The interval 134-156 (YDKRETLKRKEQDREMARALRKR) is disordered.

It belongs to the SmpB family.

Its subcellular location is the cytoplasm. Functionally, required for rescue of stalled ribosomes mediated by trans-translation. Binds to transfer-messenger RNA (tmRNA), required for stable association of tmRNA with ribosomes. tmRNA and SmpB together mimic tRNA shape, replacing the anticodon stem-loop with SmpB. tmRNA is encoded by the ssrA gene; the 2 termini fold to resemble tRNA(Ala) and it encodes a 'tag peptide', a short internal open reading frame. During trans-translation Ala-aminoacylated tmRNA acts like a tRNA, entering the A-site of stalled ribosomes, displacing the stalled mRNA. The ribosome then switches to translate the ORF on the tmRNA; the nascent peptide is terminated with the 'tag peptide' encoded by the tmRNA and targeted for degradation. The ribosome is freed to recommence translation, which seems to be the essential function of trans-translation. This Latilactobacillus sakei subsp. sakei (strain 23K) (Lactobacillus sakei subsp. sakei) protein is SsrA-binding protein.